A 577-amino-acid chain; its full sequence is Sensor protein ChvG (577 aa).

Residues 1 to 29 lie on the Cytoplasmic side of the membrane; sequence MRGQRRWAHPFTLIRRLFGNAVFSSLTRR. The chain crosses the membrane as a helical span at residues 30-50; the sequence is IVFFNLVALVVLVGGIMYLNQ. Residues 51–260 are Periplasmic-facing; that stretch reads FREGLIDARV…DIDKIVHAER (210 aa). A helical transmembrane segment spans residues 261 to 281; the sequence is LAIIRVFGVAALVNVILSLLL. The Cytoplasmic portion of the chain corresponds to 282 to 577; it reads SSTIANPLRR…VLSLPAGPHP (296 aa). One can recognise an HAMP domain in the interval 283–339; it reads STIANPLRRLSAAAIRVRRGGAKEREEIPDFSSRQDEIGNLSVALREMTTALYDRIA. The region spanning 347-575 is the Histidine kinase domain; the sequence is DVSHELKNPL…RFVLSLPAGP (229 aa). The residue at position 350 (H350) is a Phosphohistidine.

Homodimer.

The protein resides in the cell inner membrane. It catalyses the reaction ATP + protein L-histidine = ADP + protein N-phospho-L-histidine.. The protein operates within glycan metabolism; exopolysaccharide biosynthesis. In terms of biological role, member of a two-component regulatory system ChvG(ExoS)/ChvI involved in regulating the production of succinoglycan. Activates ChvI by phosphorylation. The sequence is that of Sensor protein ChvG (chvG) from Rhizobium meliloti (strain 1021) (Ensifer meliloti).